A 537-amino-acid polypeptide reads, in one-letter code: Light-independent protochlorophyllide reductase subunit B (537 aa).

Position 36 (Asp36) interacts with [4Fe-4S] cluster. The active-site Proton donor is Asp292. Position 428-429 (428-429 (GL)) interacts with substrate. Residues 459-483 (TAGETAGQATEAATAPATPGAPLTG) are disordered.

Belongs to the ChlB/BchB/BchZ family. In terms of assembly, protochlorophyllide reductase is composed of three subunits; BchL, BchN and BchB. Forms a heterotetramer of two BchB and two BchN subunits. [4Fe-4S] cluster serves as cofactor.

The enzyme catalyses chlorophyllide a + oxidized 2[4Fe-4S]-[ferredoxin] + 2 ADP + 2 phosphate = protochlorophyllide a + reduced 2[4Fe-4S]-[ferredoxin] + 2 ATP + 2 H2O. It functions in the pathway porphyrin-containing compound metabolism; bacteriochlorophyll biosynthesis (light-independent). Component of the dark-operative protochlorophyllide reductase (DPOR) that uses Mg-ATP and reduced ferredoxin to reduce ring D of protochlorophyllide (Pchlide) to form chlorophyllide a (Chlide). This reaction is light-independent. The NB-protein (BchN-BchB) is the catalytic component of the complex. In Chloroherpeton thalassium (strain ATCC 35110 / GB-78), this protein is Light-independent protochlorophyllide reductase subunit B.